Consider the following 428-residue polypeptide: Pregnancy-specific beta-1-glycoprotein 3 (428 aa).

The N-terminal stretch at 1-34 is a signal peptide; that stretch reads MGPLSAPPCTQRITWKGLLLTALLLNFWNLPTTA. The 110-residue stretch at 35-144 folds into the Ig-like V-type domain; that stretch reads QVTIEAEPTK…TGHFTFTLYL (110 aa). Residues N104 and N111 are each glycosylated (N-linked (GlcNAc...) asparagine). The short motif at 127-129 is the Cell attachment site element; sequence RGD. Ig-like C2-type domains follow at residues 147-234, 240-327, and 335-410; these read PKPS…VTLN, PKPY…VTLN, and PRIY…KSMT. Intrachain disulfides connect C169-C217, C262-C310, and C354-C394. N-linked (GlcNAc...) asparagine glycosylation is found at N268 and N303.

The protein belongs to the immunoglobulin superfamily. CEA family.

The protein localises to the secreted. This is Pregnancy-specific beta-1-glycoprotein 3 (PSG3) from Homo sapiens (Human).